We begin with the raw amino-acid sequence, 73 residues long: Putative membrane protein insertion efficiency factor (73 aa).

This sequence belongs to the UPF0161 family.

The protein resides in the cell inner membrane. Its function is as follows. Could be involved in insertion of integral membrane proteins into the membrane. The polypeptide is Putative membrane protein insertion efficiency factor (Neisseria gonorrhoeae (strain ATCC 700825 / FA 1090)).